The sequence spans 379 residues: UDP-N-acetylglucosamine--N-acetylmuramyl-(pentapeptide) pyrophosphoryl-undecaprenol N-acetylglucosamine transferase (379 aa).

UDP-N-acetyl-alpha-D-glucosamine contacts are provided by residues 19-21 (TGG), Asn-133, Arg-174, Ser-207, Ile-261, and Gln-306.

Belongs to the glycosyltransferase 28 family. MurG subfamily.

Its subcellular location is the cell inner membrane. It catalyses the reaction di-trans,octa-cis-undecaprenyl diphospho-N-acetyl-alpha-D-muramoyl-L-alanyl-D-glutamyl-meso-2,6-diaminopimeloyl-D-alanyl-D-alanine + UDP-N-acetyl-alpha-D-glucosamine = di-trans,octa-cis-undecaprenyl diphospho-[N-acetyl-alpha-D-glucosaminyl-(1-&gt;4)]-N-acetyl-alpha-D-muramoyl-L-alanyl-D-glutamyl-meso-2,6-diaminopimeloyl-D-alanyl-D-alanine + UDP + H(+). Its pathway is cell wall biogenesis; peptidoglycan biosynthesis. Functionally, cell wall formation. Catalyzes the transfer of a GlcNAc subunit on undecaprenyl-pyrophosphoryl-MurNAc-pentapeptide (lipid intermediate I) to form undecaprenyl-pyrophosphoryl-MurNAc-(pentapeptide)GlcNAc (lipid intermediate II). The polypeptide is UDP-N-acetylglucosamine--N-acetylmuramyl-(pentapeptide) pyrophosphoryl-undecaprenol N-acetylglucosamine transferase (Porphyromonas gingivalis (strain ATCC 33277 / DSM 20709 / CIP 103683 / JCM 12257 / NCTC 11834 / 2561)).